The sequence spans 351 residues: Dihydroorotate dehydrogenase (quinone) (351 aa).

FMN-binding positions include 61-65 (AGLDK) and T85. K65 contributes to the substrate binding site. 110 to 114 (NRMGF) is a substrate binding site. The FMN site is built by N139 and N172. N172 contacts substrate. S175 (nucleophile) is an active-site residue. N177 lines the substrate pocket. Residues K217 and T245 each contribute to the FMN site. 246-247 (NT) contacts substrate. FMN is bound by residues G268, G297, and 318–319 (YS).

Belongs to the dihydroorotate dehydrogenase family. Type 2 subfamily. In terms of assembly, monomer. The cofactor is FMN.

The protein resides in the cell membrane. The catalysed reaction is (S)-dihydroorotate + a quinone = orotate + a quinol. It functions in the pathway pyrimidine metabolism; UMP biosynthesis via de novo pathway; orotate from (S)-dihydroorotate (quinone route): step 1/1. Functionally, catalyzes the conversion of dihydroorotate to orotate with quinone as electron acceptor. The polypeptide is Dihydroorotate dehydrogenase (quinone) (Xanthomonas oryzae pv. oryzae (strain MAFF 311018)).